The primary structure comprises 140 residues: Acyl-coenzyme A thioesterase 13 (140 aa).

Position 1 is an N-acetylmethionine (methionine 1). At threonine 2 the chain carries N-acetylthreonine; in Acyl-coenzyme A thioesterase 13, N-terminally processed. Lysine 27, lysine 37, and lysine 43 each carry N6-acetyllysine. CoA is bound at residue glutamate 46. Substrate contacts are provided by asparagine 50 and glycine 81. CoA is bound by residues serine 83, 90–95, and 108–113; these read YMSPAK and KQGKTL. Lysine 108 and lysine 127 each carry N6-acetyllysine. Histidine 137 provides a ligand contact to CoA.

It belongs to the thioesterase PaaI family. As to quaternary structure, homotetramer. Interacts with PCTP.

It is found in the cytoplasm. The protein resides in the cytosol. It localises to the mitochondrion. The protein localises to the nucleus. Its subcellular location is the cytoskeleton. It is found in the spindle. The enzyme catalyses a fatty acyl-CoA + H2O = a fatty acid + CoA + H(+). The catalysed reaction is decanoyl-CoA + H2O = decanoate + CoA + H(+). It carries out the reaction octanoyl-CoA + H2O = octanoate + CoA + H(+). It catalyses the reaction butanoyl-CoA + H2O = butanoate + CoA + H(+). The enzyme catalyses hexanoyl-CoA + H2O = hexanoate + CoA + H(+). The catalysed reaction is tetradecanoyl-CoA + H2O = tetradecanoate + CoA + H(+). It carries out the reaction hexadecanoyl-CoA + H2O = hexadecanoate + CoA + H(+). It catalyses the reaction dodecanoyl-CoA + H2O = dodecanoate + CoA + H(+). The enzyme catalyses (9Z)-octadecenoyl-CoA + H2O = (9Z)-octadecenoate + CoA + H(+). The catalysed reaction is (5Z,8Z,11Z,14Z)-eicosatetraenoyl-CoA + H2O = (5Z,8Z,11Z,14Z)-eicosatetraenoate + CoA + H(+). Functionally, catalyzes the hydrolysis of acyl-CoAs into free fatty acids and coenzyme A (CoASH), regulating their respective intracellular levels. Has acyl-CoA thioesterase activity towards medium (C12) and long-chain (C18) fatty acyl-CoA substrates. Can also hydrolyze 3-hydroxyphenylacetyl-CoA and 3,4-dihydroxyphenylacetyl-CoA (in vitro). May play a role in controlling adaptive thermogenesis. This chain is Acyl-coenzyme A thioesterase 13, found in Homo sapiens (Human).